We begin with the raw amino-acid sequence, 277 residues long: Proteasome assembly chaperone 1 (277 aa).

It belongs to the PSMG1 family. In terms of assembly, forms a heterodimer with psmg2. In terms of processing, degraded by the proteasome upon completion of 20S proteasome maturation.

The protein resides in the cytoplasm. Its subcellular location is the endoplasmic reticulum. In terms of biological role, chaperone protein which promotes assembly of the 20S proteasome as part of a heterodimer with psmg2. This chain is Proteasome assembly chaperone 1, found in Danio rerio (Zebrafish).